We begin with the raw amino-acid sequence, 523 residues long: Non-specific phospholipase C3 (523 aa).

The disordered stretch occupies residues 44–64 (DGVSESEPRSNPLSTSDPNSA). A compositionally biased stretch (polar residues) spans 52 to 64 (RSNPLSTSDPNSA).

It belongs to the bacterial phospholipase C family. As to expression, expressed in root tips, cotyledons, on leaf margins, stems, young anthers and funiculus.

It catalyses the reaction a 1-acyl-sn-glycero-3-phosphate + H2O = a 1-acyl-sn-glycerol + phosphate. In terms of biological role, possesses specific phosphatase activity toward lysophosphatidic acid (LPA) in vitro. Does not show phospholipase C activity. May play a role in signal transduction and storage lipid synthesis. May be involved in brassinolide-mediated signaling in root development. In Arabidopsis thaliana (Mouse-ear cress), this protein is Non-specific phospholipase C3 (NPC3).